The primary structure comprises 364 residues: Large ribosomal subunit protein bL27m (364 aa).

The N-terminal 19 residues, 1–19, are a transit peptide targeting the mitochondrion; sequence MFSSSWQQVPKFVVQQVRT.

This sequence belongs to the bacterial ribosomal protein bL27 family.

It is found in the mitochondrion. Component of the large subunit of mitochondrial ribosome. This is Large ribosomal subunit protein bL27m (MRPL2) from Kluyveromyces lactis (strain ATCC 8585 / CBS 2359 / DSM 70799 / NBRC 1267 / NRRL Y-1140 / WM37) (Yeast).